Reading from the N-terminus, the 407-residue chain is Putative serine/threonine-protein kinase C01C4.3 (407 aa).

The span at 33-57 (NQLQNHPPRNATQSPQRQPRTSESS) shows a compositional bias: polar residues. Residues 33-68 (NQLQNHPPRNATQSPQRQPRTSESSMDFPRSALRRN) are disordered. Positions 126–397 (YTVNKQLGTG…RKCLAKEKLL (272 aa)) constitute a Protein kinase domain. Residues 132–140 (LGTGRFGFI) and lysine 155 contribute to the ATP site. The Proton acceptor role is filled by asparagine 251.

The protein belongs to the protein kinase superfamily. Ser/Thr protein kinase family.

It catalyses the reaction L-seryl-[protein] + ATP = O-phospho-L-seryl-[protein] + ADP + H(+). It carries out the reaction L-threonyl-[protein] + ATP = O-phospho-L-threonyl-[protein] + ADP + H(+). The chain is Putative serine/threonine-protein kinase C01C4.3 from Caenorhabditis elegans.